A 747-amino-acid chain; its full sequence is Histone-lysine N-methyltransferase EZH1 (747 aa).

Positions 186–229 are disordered; sequence YSDEDEEGHNDTSDGKQDDSKEDLPVTRKRKRHAIEGSKKSSKK. The span at 194 to 211 shows a compositional bias: basic and acidic residues; it reads HNDTSDGKQDDSKEDLPV. Residue Lys327 forms a Glycyl lysine isopeptide (Lys-Gly) (interchain with G-Cter in SUMO2) linkage. The disordered stretch occupies residues 375–421; it reads TSASAVAETKEGDSDRDTGNDWASSSSEANSRCQTPTKQKASPAPPQ. A compositionally biased stretch (basic and acidic residues) spans 382-393; sequence ETKEGDSDRDTG. Residues 395-414 are compositionally biased toward polar residues; sequence DWASSSSEANSRCQTPTKQK. Positions 504–606 constitute a CXC domain; that stretch reads CRKIQLKKDN…CKVVSCKNCS (103 aa). An SET domain is found at 613 to 728; sequence KHLLLAPSDV…AGEELFFDYR (116 aa).

The protein belongs to the class V-like SAM-binding methyltransferase superfamily. Histone-lysine methyltransferase family. EZ subfamily. As to quaternary structure, component of the PRC2/EED-EZH1 complex, which includes EED, EZH1, SUZ12, RBBP4 and AEBP2. The PRC2/EED-EZH1 is less abundant than the PRC2/EED-EZH2 complex, has weak methyltransferase activity and compacts chromatin in the absence of the methyltransferase cofactor S-adenosyl-L-methionine (SAM). Interacts with EZHIP; the interaction blocks EZH1 methyltransferase activity.

Its subcellular location is the nucleus. It catalyses the reaction L-lysyl(27)-[histone H3] + 3 S-adenosyl-L-methionine = N(6),N(6),N(6)-trimethyl-L-lysyl(27)-[histone H3] + 3 S-adenosyl-L-homocysteine + 3 H(+). In terms of biological role, polycomb group (PcG) protein. Catalytic subunit of the PRC2/EED-EZH1 complex, which methylates 'Lys-27' of histone H3, leading to transcriptional repression of the affected target gene. Able to mono-, di- and trimethylate 'Lys-27' of histone H3 to form H3K27me1, H3K27me2 and H3K27me3, respectively. Required for embryonic stem cell derivation and self-renewal, suggesting that it is involved in safeguarding embryonic stem cell identity. Compared to EZH2-containing complexes, it is less abundant in embryonic stem cells, has weak methyltransferase activity and plays a less critical role in forming H3K27me3, which is required for embryonic stem cell identity and proper differentiation. The polypeptide is Histone-lysine N-methyltransferase EZH1 (EZH1) (Bos taurus (Bovine)).